The primary structure comprises 742 residues: Envelope glycoprotein H (742 aa).

Residues 1–23 (MRPGLPSYLIILAVCLFSHLLSS) form the signal peptide. Residues 24-719 (RYGAEAVSEP…VVDATDSRLL (696 aa)) lie on the Virion surface side of the membrane. N55, N62, N67, and N192 each carry an N-linked (GlcNAc...) asparagine; by host glycan. A disulfide bridge links C195 with C211. Positions 217–280 (YLIDELRYVK…QTEKHELLVL (64 aa)) are interaction with gL. Cystine bridges form between C330-C383, C495-C522, and C571-C624. N-linked (GlcNAc...) asparagine; by host glycans are attached at residues N641 and N700. A helical membrane pass occupies residues 720-740 (MMSVYALSAIIGIYLLYRMLK). Topologically, residues 741–742 (TC) are intravirion.

The protein belongs to the herpesviridae glycoprotein H family. Interacts with glycoprotein L (gL); this interaction is necessary for the correct processing and cell surface expression of gH. The heterodimer gH/gL seems to interact with gB trimers during fusion. Forms the envelope pentamer complex (PC) composed of gH, gL, UL128, UL130, and UL131A. The pentamer interacts with host NRP2. Forms the envelope trimer complex composed of gH, gL, and gO. The trimer interacts with host PDGFRA. The trimer also interacts with host EPHA2. The trimer also interacts with host TGFBR3. Interacts with UL116. In terms of processing, N-glycosylated, O-glycosylated, and sialylated.

The protein resides in the virion membrane. The protein localises to the host cell membrane. Its subcellular location is the host endosome membrane. Its function is as follows. The heterodimer glycoprotein H-glycoprotein L is required for the fusion of viral and plasma membranes leading to virus entry into the host cell. Following initial binding to host receptor, membrane fusion is mediated by the fusion machinery composed of gB and the heterodimer gH/gL. May also be involved in the fusion between the virion envelope and the outer nuclear membrane during virion morphogenesis. In human cytomegalovirus, forms two distincts complexes to mediate viral entry, a trimer and a pentamer at the surface of the virion envelope. The gH-gL-gO trimer is required for infection in fibroblasts by interacting with host PDGFRA, and in glioblastoma cells by interacting with host EPHA2. Thsi trimer may also be required in other cell types using host TGFBR3. The gH-gL-UL128-UL130-UL131A pentamer is essential for viral entry in epithelial, endothelial and myeloid cells via interaction with host NRP2. The chain is Envelope glycoprotein H from Human cytomegalovirus (strain Merlin) (HHV-5).